Reading from the N-terminus, the 1201-residue chain is uncharacterized protein (1201 aa).

A helical transmembrane segment spans residues 140–160; the sequence is IIINLIFFFAFIIVGIYLFKP. 2 coiled-coil regions span residues 420-459 and 536-574; these read QKKQ…AELN and AIKA…ITKM.

The protein resides in the cell membrane. This is an uncharacterized protein from Bacillus subtilis (strain 168).